The sequence spans 100 residues: Urease subunit gamma (100 aa).

Belongs to the urease gamma subunit family. Heterotrimer of UreA (gamma), UreB (beta) and UreC (alpha) subunits. Three heterotrimers associate to form the active enzyme.

The protein localises to the cytoplasm. It carries out the reaction urea + 2 H2O + H(+) = hydrogencarbonate + 2 NH4(+). Its pathway is nitrogen metabolism; urea degradation; CO(2) and NH(3) from urea (urease route): step 1/1. In Hahella chejuensis (strain KCTC 2396), this protein is Urease subunit gamma.